A 370-amino-acid polypeptide reads, in one-letter code: Aspartate-semialdehyde dehydrogenase 1 (370 aa).

NADP(+)-binding positions include 9–12, 36–37, and Q72; these read RGMV and TS. R101 lines the phosphate pocket. C134 acts as the Acyl-thioester intermediate in catalysis. Residue C134 is modified to S-cysteinyl cysteine; in inhibited form. Q161 contacts substrate. Residues 164–165 and P192 each bind NADP(+); that span reads SG. Substrate is bound at residue E240. K243 serves as a coordination point for phosphate. R267 provides a ligand contact to substrate. The active-site Proton acceptor is H274. Q350 is an NADP(+) binding site.

The protein belongs to the aspartate-semialdehyde dehydrogenase family. As to quaternary structure, homodimer.

It carries out the reaction L-aspartate 4-semialdehyde + phosphate + NADP(+) = 4-phospho-L-aspartate + NADPH + H(+). It functions in the pathway amino-acid biosynthesis; L-lysine biosynthesis via DAP pathway; (S)-tetrahydrodipicolinate from L-aspartate: step 2/4. Its pathway is amino-acid biosynthesis; L-methionine biosynthesis via de novo pathway; L-homoserine from L-aspartate: step 2/3. It participates in amino-acid biosynthesis; L-threonine biosynthesis; L-threonine from L-aspartate: step 2/5. Its activity is regulated as follows. Inhibited by S-methyl-L-cysteine sulfoxide in vitro, via the formation of a covalently bound cysteine at the active site Cys-134. Functionally, catalyzes the NADPH-dependent formation of L-aspartate-semialdehyde (L-ASA) by the reductive dephosphorylation of L-aspartyl-4-phosphate. This chain is Aspartate-semialdehyde dehydrogenase 1 (asd1), found in Vibrio cholerae serotype O1 (strain ATCC 39315 / El Tor Inaba N16961).